The following is a 164-amino-acid chain: S-ribosylhomocysteine lyase (164 aa).

Positions 61, 65, and 131 each coordinate Fe cation.

Belongs to the LuxS family. Homodimer. Requires Fe cation as cofactor.

The catalysed reaction is S-(5-deoxy-D-ribos-5-yl)-L-homocysteine = (S)-4,5-dihydroxypentane-2,3-dione + L-homocysteine. In terms of biological role, involved in the synthesis of autoinducer 2 (AI-2) which is secreted by bacteria and is used to communicate both the cell density and the metabolic potential of the environment. The regulation of gene expression in response to changes in cell density is called quorum sensing. Catalyzes the transformation of S-ribosylhomocysteine (RHC) to homocysteine (HC) and 4,5-dihydroxy-2,3-pentadione (DPD). In Bifidobacterium longum subsp. infantis (strain ATCC 15697 / DSM 20088 / JCM 1222 / NCTC 11817 / S12), this protein is S-ribosylhomocysteine lyase.